We begin with the raw amino-acid sequence, 145 residues long: D-aminoacyl-tRNA deacylase (145 aa).

The short motif at 137–138 is the Gly-cisPro motif, important for rejection of L-amino acids element; sequence GP.

It belongs to the DTD family. In terms of assembly, homodimer.

The protein localises to the cytoplasm. The catalysed reaction is glycyl-tRNA(Ala) + H2O = tRNA(Ala) + glycine + H(+). It carries out the reaction a D-aminoacyl-tRNA + H2O = a tRNA + a D-alpha-amino acid + H(+). Its function is as follows. An aminoacyl-tRNA editing enzyme that deacylates mischarged D-aminoacyl-tRNAs. Also deacylates mischarged glycyl-tRNA(Ala), protecting cells against glycine mischarging by AlaRS. Acts via tRNA-based rather than protein-based catalysis; rejects L-amino acids rather than detecting D-amino acids in the active site. By recycling D-aminoacyl-tRNA to D-amino acids and free tRNA molecules, this enzyme counteracts the toxicity associated with the formation of D-aminoacyl-tRNA entities in vivo and helps enforce protein L-homochirality. This chain is D-aminoacyl-tRNA deacylase, found in Pseudomonas aeruginosa (strain UCBPP-PA14).